We begin with the raw amino-acid sequence, 275 residues long: Dermonecrotic toxin SpeSicTox-betaIIA2ii (275 aa).

The active site involves His5. Residues Glu25 and Asp27 each contribute to the Mg(2+) site. The active-site Nucleophile is His41. Cystine bridges form between Cys45–Cys51 and Cys47–Cys190. Mg(2+) is bound at residue Asp85.

It belongs to the arthropod phospholipase D family. Class II subfamily. The cofactor is Mg(2+). In terms of tissue distribution, expressed by the venom gland.

The protein resides in the secreted. The enzyme catalyses an N-(acyl)-sphingosylphosphocholine = an N-(acyl)-sphingosyl-1,3-cyclic phosphate + choline. It catalyses the reaction an N-(acyl)-sphingosylphosphoethanolamine = an N-(acyl)-sphingosyl-1,3-cyclic phosphate + ethanolamine. It carries out the reaction a 1-acyl-sn-glycero-3-phosphocholine = a 1-acyl-sn-glycero-2,3-cyclic phosphate + choline. The catalysed reaction is a 1-acyl-sn-glycero-3-phosphoethanolamine = a 1-acyl-sn-glycero-2,3-cyclic phosphate + ethanolamine. Functionally, dermonecrotic toxins cleave the phosphodiester linkage between the phosphate and headgroup of certain phospholipids (sphingolipid and lysolipid substrates), forming an alcohol (often choline) and a cyclic phosphate. This toxin acts on sphingomyelin (SM). It may also act on ceramide phosphoethanolamine (CPE), lysophosphatidylcholine (LPC) and lysophosphatidylethanolamine (LPE), but not on lysophosphatidylserine (LPS), and lysophosphatidylglycerol (LPG). It acts by transphosphatidylation, releasing exclusively cyclic phosphate products as second products. Induces dermonecrosis, hemolysis, increased vascular permeability, edema, inflammatory response, and platelet aggregation. In Sicarius peruensis (Six-eyed sand spider), this protein is Dermonecrotic toxin SpeSicTox-betaIIA2ii.